A 440-amino-acid polypeptide reads, in one-letter code: Protein root UVB sensitive 3 (440 aa).

The next 3 helical transmembrane spans lie at 109-129, 154-174, and 232-252; these read IGATFQWFLRDFTGMLGGILF, IGMLMDLLSPLFPSAFIVVVC, and FTSGNPMAIWLSFLSLTVFHM.

Belongs to the RUS1 family.

It is found in the membrane. This is Protein root UVB sensitive 3 from Arabidopsis thaliana (Mouse-ear cress).